A 479-amino-acid polypeptide reads, in one-letter code: D-aminoacyl-tRNA deacylase (479 aa).

It belongs to the DtdA deacylase family. In terms of assembly, monomer. The cofactor is Zn(2+).

It carries out the reaction a D-aminoacyl-tRNA + H2O = a tRNA + a D-alpha-amino acid + H(+). The catalysed reaction is glycyl-tRNA(Ala) + H2O = tRNA(Ala) + glycine + H(+). Functionally, D-aminoacyl-tRNA deacylase with broad substrate specificity. By recycling D-aminoacyl-tRNA to D-amino acids and free tRNA molecules, this enzyme counteracts the toxicity associated with the formation of D-aminoacyl-tRNA entities in vivo. The sequence is that of D-aminoacyl-tRNA deacylase from Methanococcoides burtonii (strain DSM 6242 / NBRC 107633 / OCM 468 / ACE-M).